Consider the following 399-residue polypeptide: Adenylate cyclase (399 aa).

Residues 1-10 (MTVGDTTSGS) show a composition bias toward polar residues. Residues 1 to 35 (MTVGDTTSGSGEEPAADSSVHATPHHEVDHTVEPT) are disordered. Over residues 24-33 (PHHEVDHTVE) the composition is skewed to basic and acidic residues. The Guanylate cyclase domain maps to 198-307 (RVRFADLVGF…TTVNLASRLT (110 aa)). Mg(2+)-binding residues include aspartate 203 and aspartate 247.

Belongs to the adenylyl cyclase class-3 family. Mg(2+) is required as a cofactor.

It catalyses the reaction ATP = 3',5'-cyclic AMP + diphosphate. This Streptomyces griseus protein is Adenylate cyclase (cya).